A 378-amino-acid polypeptide reads, in one-letter code: Cytochrome b (378 aa).

4 consecutive transmembrane segments (helical) span residues 35–55 (FGSL…FLAM), 79–101 (WIIR…CHIG), 114–134 (TWIM…LGYV), and 180–200 (FFSL…LHIF). His85 and His99 together coordinate heme b. 2 residues coordinate heme b: His184 and His198. His203 provides a ligand contact to a ubiquinone. 4 helical membrane passes run 226 to 246 (YSAK…FISF), 290 to 310 (LGGV…PLTH), 326 to 346 (FFWL…QPVC), and 350 to 370 (VMCS…CGPL).

It belongs to the cytochrome b family. As to quaternary structure, the main subunits of complex b-c1 are: cytochrome b, cytochrome c1 and the Rieske protein. It depends on heme b as a cofactor.

The protein localises to the mitochondrion inner membrane. Functionally, component of the ubiquinol-cytochrome c reductase complex (complex III or cytochrome b-c1 complex) that is part of the mitochondrial respiratory chain. The b-c1 complex mediates electron transfer from ubiquinol to cytochrome c. Contributes to the generation of a proton gradient across the mitochondrial membrane that is then used for ATP synthesis. In Paraspadella gotoi (Arrow worm), this protein is Cytochrome b (mt:Cyt-b).